The primary structure comprises 898 residues: Methionine--tRNA ligase, cytoplasmic (898 aa).

The GST C-terminal domain maps to 74-198; the sequence is GWEQDDLTNQ…VLKQQGVLAL (125 aa). The 'HIGH' region motif lies at 273–283; sequence PYVNNVPHLGN. The 'KMSKS' region motif lies at 593–597; that stretch reads KFSKS. Lys596 serves as a coordination point for ATP. Ser825 is subject to Phosphoserine. Thr833 is modified (phosphothreonine). In terms of domain architecture, WHEP-TRS spans 839–895; that stretch reads QIQALTEEVTKQGNIVRELKAQKADKNQIAAEVAKLLDLKKQLALAEGKPLETSKGK.

This sequence belongs to the class-I aminoacyl-tRNA synthetase family. In terms of assembly, monomer. Part of a multisubunit complex that groups tRNA ligases for Arg (RARS1), Asp (DARS1), Gln (QARS1), Ile (IARS1), Leu (LARS1), Lys (KARS1), Met (MARS1) the bifunctional ligase for Glu and Pro (EPRS1) and the auxiliary subunits AIMP1/p43, AIMP2/p38 and EEF1E1/p18. Forms a linear complex that contains MARS1, EEF1E1, EPRS1 and AIMP2 that is at the core of the multisubunit complex.

It localises to the cytoplasm. Its subcellular location is the cytosol. The protein resides in the nucleus. The protein localises to the nucleolus. It carries out the reaction tRNA(Met) + L-methionine + ATP = L-methionyl-tRNA(Met) + AMP + diphosphate. Catalyzes the specific attachment of an amino acid to its cognate tRNA in a 2 step reaction: the amino acid (AA) is first activated by ATP to form AA-AMP and then transferred to the acceptor end of the tRNA. Plays a role in the synthesis of ribosomal RNA in the nucleolus. This is Methionine--tRNA ligase, cytoplasmic (MARS1) from Bos taurus (Bovine).